A 482-amino-acid chain; its full sequence is MKFIIKLFPEITIKSQSVRLRFIKILTGNIRNVLKPYDETLAVVRHWDNIEVRAKDESKRAAIVAELTRIPGIHHILAVEDRPYTDVHHIFEQTLEMNRERIEGKTFCVRVKRRGKHEFSSQDVERYVGGGLNQHVASAQVQLNRPQVTVNLEIEDERLILVTARYEGIGGYPIGTQEDVLSLISGGFDSGVSSYMLMRRGCRVHYCFFNLGGAAHEIGVRQVAHYLWKRYGSTHRVRFVAINFEPVVGEILEKVDDGQMGVVLKRMMVRAASKIAERYGVQALVTGEALGQVSSQTLTNLRLIDNASDTLILRPLISHDKEHIIKLAREIGTEDFARTMPEYCGVISKSPTVKAVKAKIEHEEQNFDFAILERMVEEATNVDIREIAEKAQEEVAEVETVASFSHNDVILDIRSNDEQEARPLEVEGVVVKSLPFYKLATQFGDLDQSKSWLLYCERGVMSRLQALYLHEQGFKNVKVYRP.

In terms of domain architecture, THUMP spans 61–165 (AAIVAELTRI…DERLILVTAR (105 aa)). ATP is bound by residues 183 to 184 (LI), Lys265, Gly287, and Gln296. An intrachain disulfide couples Cys344 to Cys456. In terms of domain architecture, Rhodanese spans 404–482 (FSHNDVILDI…GFKNVKVYRP (79 aa)). Cys456 acts as the Cysteine persulfide intermediate in catalysis.

This sequence belongs to the ThiI family.

It localises to the cytoplasm. The enzyme catalyses [ThiI sulfur-carrier protein]-S-sulfanyl-L-cysteine + a uridine in tRNA + 2 reduced [2Fe-2S]-[ferredoxin] + ATP + H(+) = [ThiI sulfur-carrier protein]-L-cysteine + a 4-thiouridine in tRNA + 2 oxidized [2Fe-2S]-[ferredoxin] + AMP + diphosphate. The catalysed reaction is [ThiS sulfur-carrier protein]-C-terminal Gly-Gly-AMP + S-sulfanyl-L-cysteinyl-[cysteine desulfurase] + AH2 = [ThiS sulfur-carrier protein]-C-terminal-Gly-aminoethanethioate + L-cysteinyl-[cysteine desulfurase] + A + AMP + 2 H(+). The protein operates within cofactor biosynthesis; thiamine diphosphate biosynthesis. Functionally, catalyzes the ATP-dependent transfer of a sulfur to tRNA to produce 4-thiouridine in position 8 of tRNAs, which functions as a near-UV photosensor. Also catalyzes the transfer of sulfur to the sulfur carrier protein ThiS, forming ThiS-thiocarboxylate. This is a step in the synthesis of thiazole, in the thiamine biosynthesis pathway. The sulfur is donated as persulfide by IscS. The sequence is that of tRNA sulfurtransferase from Erwinia tasmaniensis (strain DSM 17950 / CFBP 7177 / CIP 109463 / NCPPB 4357 / Et1/99).